A 501-amino-acid chain; its full sequence is CUGBP Elav-like family member 1 (501 aa).

Positions 2-196 (NGSLDHPDQP…DTQKDKEQKR (195 aa)) are binds strongly to URE. RRM domains are found at residues 16–99 (IKMF…PADS) and 108–188 (RKLF…FADT). Low complexity-rich tracts occupy residues 274-298 (PTGS…TPSG) and 312-323 (SSPTSSTSSSVN). A disordered region spans residues 274-323 (PTGSSALTTSSSPLSVLTSSGTPSGQPAQSAWDAYKAGSSPTSSTSSSVN). The binds strongly to URE stretch occupies residues 397 to 501 (LLSQQNVSAA…KRSKNDSKPY (105 aa)). In terms of domain architecture, RRM 3 spans 416–494 (ANLFIYHLPQ…KRLKVQLKRS (79 aa)).

This sequence belongs to the CELF/BRUNOL family.

The protein resides in the nucleus. It localises to the cytoplasm. In terms of biological role, RNA-binding protein implicated in the regulation of several post-transcriptional events. May be involved in mRNA translation activation and stability. Involved in the regulation of muscle-specific splicing of alpha actinin pre-mRNAs via the binding to the UR-repeat element (URE) at the branch point of the non-muscle (NM) exon. This is CUGBP Elav-like family member 1 (celf1) from Danio rerio (Zebrafish).